Consider the following 194-residue polypeptide: Imidazoleglycerol-phosphate dehydratase (194 aa).

Belongs to the imidazoleglycerol-phosphate dehydratase family.

Its subcellular location is the cytoplasm. The catalysed reaction is D-erythro-1-(imidazol-4-yl)glycerol 3-phosphate = 3-(imidazol-4-yl)-2-oxopropyl phosphate + H2O. It participates in amino-acid biosynthesis; L-histidine biosynthesis; L-histidine from 5-phospho-alpha-D-ribose 1-diphosphate: step 6/9. The polypeptide is Imidazoleglycerol-phosphate dehydratase (Listeria welshimeri serovar 6b (strain ATCC 35897 / DSM 20650 / CCUG 15529 / CIP 8149 / NCTC 11857 / SLCC 5334 / V8)).